The chain runs to 182 residues: Gremlin-1 (182 aa).

An N-terminal signal peptide occupies residues 1–24 (MNCLVYALGSLFLLSGLLLPSSEG). Residues 23 to 65 (EGKKKVSGSQGAIPPPDKGQPNDSEQGQAQPGDRVRGKGKGQA) are disordered. N-linked (GlcNAc...) asparagine glycosylation is present at Asn-44. Disulfide bonds link Cys-92/Cys-142, Cys-106/Cys-156, Cys-116/Cys-174, and Cys-120/Cys-176. A CTCK domain is found at 92–182 (CKTQPLKQTI…QCRCISIDLD (91 aa)).

Belongs to the DAN family.

The protein resides in the secreted. In terms of biological role, cytokine that has an axial patterning activity. Acts like BMP antagonist in embryonic explants. Blocks the BMP2 activity. The sequence is that of Gremlin-1 (grem1) from Xenopus laevis (African clawed frog).